The sequence spans 156 residues: RNA pyrophosphohydrolase (156 aa).

In terms of domain architecture, Nudix hydrolase spans 6–148; it reads NYRPNVAAIV…KKNIYVRVIK (143 aa). The short motif at 43 to 64 is the Nudix box element; it reads GGIDKGESVKNALFRELKEEIG.

Belongs to the Nudix hydrolase family. RppH subfamily. A divalent metal cation serves as cofactor.

Its function is as follows. Accelerates the degradation of transcripts by removing pyrophosphate from the 5'-end of triphosphorylated RNA, leading to a more labile monophosphorylated state that can stimulate subsequent ribonuclease cleavage. In Campylobacter jejuni subsp. jejuni serotype O:2 (strain ATCC 700819 / NCTC 11168), this protein is RNA pyrophosphohydrolase.